A 128-amino-acid polypeptide reads, in one-letter code: Large ribosomal subunit protein eL22 (128 aa).

The residue at position 62 (T62) is a Phosphothreonine. The residue at position 66 (S66) is a Phosphoserine. N6-succinyllysine is present on K69.

It belongs to the eukaryotic ribosomal protein eL22 family. As to quaternary structure, component of the large ribosomal subunit.

The protein resides in the cytoplasm. In terms of biological role, component of the large ribosomal subunit. The ribosome is a large ribonucleoprotein complex responsible for the synthesis of proteins in the cell. The sequence is that of Large ribosomal subunit protein eL22 (RPL22) from Sus scrofa (Pig).